The following is a 411-amino-acid chain: S-inosyl-L-homocysteine hydrolase (411 aa).

Residues Asp-121 and Glu-146 each coordinate substrate. Position 147–149 (147–149 (TTT)) interacts with NAD(+). Residues Lys-176 and Asp-180 each coordinate substrate. NAD(+)-binding positions include Asn-181, 210–215 (GYGWCG), Glu-233, Asn-268, 289–291 (SGH), and Asn-335.

It belongs to the adenosylhomocysteinase family. NAD(+) is required as a cofactor.

It is found in the cytoplasm. The catalysed reaction is S-inosyl-L-homocysteine + H2O = L-homocysteine + inosine. It functions in the pathway amino-acid biosynthesis; S-adenosyl-L-methionine biosynthesis. Its function is as follows. Catalyzes the hydrolysis of S-inosyl-L-homocysteine (SIH) to L-homocysteine (Hcy) and inosine. Likely functions in a S-adenosyl-L-methionine (SAM) recycling pathway from S-adenosyl-L-homocysteine (SAH) produced from SAM-dependent methylation reactions. Can also catalyze the reverse reaction in vitro, i.e. the synthesis of SIH from Hcy and inosine. In Methanosarcina mazei (strain ATCC BAA-159 / DSM 3647 / Goe1 / Go1 / JCM 11833 / OCM 88) (Methanosarcina frisia), this protein is S-inosyl-L-homocysteine hydrolase.